Reading from the N-terminus, the 297-residue chain is F-box only protein 2 (297 aa).

The disordered stretch occupies residues 1 to 47 (MDGDGDPESVSHPEEASPEEQPEEAGAEASAEEEQLREAEEEEEAEA). The span at 16–47 (ASPEEQPEEAGAEASAEEEQLREAEEEEEAEA) shows a compositional bias: acidic residues. The 48-residue stretch at 48-95 (VEYLAELPEPLLLRVLAELPATELVQACRLVCLRWKELVDGAPLWLLK) folds into the F-box domain. Ser106 bears the Phosphoserine mark. The FBA domain occupies 117–297 (FYFLSKRRRN…VTNSSVWVEP (181 aa)). A carbohydrate contacts are provided by residues 214-216 (RTD) and 279-280 (YW).

Component of the SCF(FBXO2) complex consisting of CUL1, RBX1, SKP1 and FBXO2. Predominantly detected as heterodimer with SKP1; the heterodimer with SKP1 is not part of the SCF(FBXO2) complex. Detected in brain and cochlea, in epithelial support cells and hair cells of the organ of Corti (at protein level).

The protein localises to the cytoplasm. The protein resides in the microsome membrane. Its pathway is protein modification; protein ubiquitination. In terms of biological role, substrate recognition component of a SCF (SKP1-CUL1-F-box protein) E3 ubiquitin-protein ligase complex that mediates the ubiquitination and subsequent proteasomal degradation of target proteins. Involved in the endoplasmic reticulum-associated degradation pathway (ERAD) for misfolded lumenal proteins by recognizing and binding sugar chains on unfolded glycoproteins that are retrotranslocated into the cytosol and promoting their ubiquitination and subsequent degradation. Prevents formation of cytosolic aggregates of unfolded glycoproteins that have been retrotranslocated into the cytosol. Able to recognize and bind denatured glycoproteins, preferentially those of the high-mannose type. This is F-box only protein 2 (Fbxo2) from Mus musculus (Mouse).